A 469-amino-acid polypeptide reads, in one-letter code: 3-isopropylmalate dehydratase large subunit (469 aa).

The [4Fe-4S] cluster site is built by Cys348, Cys409, and Cys412.

Belongs to the aconitase/IPM isomerase family. LeuC type 1 subfamily. Heterodimer of LeuC and LeuD. It depends on [4Fe-4S] cluster as a cofactor.

The enzyme catalyses (2R,3S)-3-isopropylmalate = (2S)-2-isopropylmalate. It functions in the pathway amino-acid biosynthesis; L-leucine biosynthesis; L-leucine from 3-methyl-2-oxobutanoate: step 2/4. Its function is as follows. Catalyzes the isomerization between 2-isopropylmalate and 3-isopropylmalate, via the formation of 2-isopropylmaleate. This chain is 3-isopropylmalate dehydratase large subunit, found in Nitrosococcus oceani (strain ATCC 19707 / BCRC 17464 / JCM 30415 / NCIMB 11848 / C-107).